The sequence spans 160 residues: Large ribosomal subunit protein eL21A (160 aa).

Residue Lys-32 forms a Glycyl lysine isopeptide (Lys-Gly) (interchain with G-Cter in ubiquitin) linkage.

Belongs to the eukaryotic ribosomal protein eL21 family. In terms of assembly, component of the large ribosomal subunit (LSU). Mature yeast ribosomes consist of a small (40S) and a large (60S) subunit. The 40S small subunit contains 1 molecule of ribosomal RNA (18S rRNA) and 33 different proteins (encoded by 57 genes). The large 60S subunit contains 3 rRNA molecules (25S, 5.8S and 5S rRNA) and 46 different proteins (encoded by 81 genes).

It localises to the cytoplasm. In terms of biological role, component of the ribosome, a large ribonucleoprotein complex responsible for the synthesis of proteins in the cell. The small ribosomal subunit (SSU) binds messenger RNAs (mRNAs) and translates the encoded message by selecting cognate aminoacyl-transfer RNA (tRNA) molecules. The large subunit (LSU) contains the ribosomal catalytic site termed the peptidyl transferase center (PTC), which catalyzes the formation of peptide bonds, thereby polymerizing the amino acids delivered by tRNAs into a polypeptide chain. The nascent polypeptides leave the ribosome through a tunnel in the LSU and interact with protein factors that function in enzymatic processing, targeting, and the membrane insertion of nascent chains at the exit of the ribosomal tunnel. In Saccharomyces cerevisiae (strain ATCC 204508 / S288c) (Baker's yeast), this protein is Large ribosomal subunit protein eL21A.